A 288-amino-acid chain; its full sequence is Homeobox protein Hox-B4a (288 aa).

Positions 10–136 are disordered; the sequence is SNYVDPKFPP…ASSPASTRKD (127 aa). The span at 118-132 shows a compositional bias: polar residues; that stretch reads CGQTPHSQGASSPAS. The short motif at 139–144 is the Antp-type hexapeptide element; the sequence is VYPWMK. The segment at residues 160–219 is a DNA-binding region (homeobox); that stretch reads PKRSRTAYTRQQVLELEKEFHYNRYLTRRRRVEIAHTLCLSERQIKIWFQNRRMKWKKDH.

Belongs to the Antp homeobox family. Deformed subfamily.

It is found in the nucleus. Sequence-specific transcription factor which is part of a developmental regulatory system that provides cells with specific positional identities on the anterior-posterior axis. The sequence is that of Homeobox protein Hox-B4a (hoxb4a) from Takifugu rubripes (Japanese pufferfish).